A 184-amino-acid polypeptide reads, in one-letter code: Sec-independent protein translocase protein TatB (184 aa).

A helical membrane pass occupies residues 1-21; that stretch reads MFDIGFSELVLLFVVGLIVLG. Residues 149-168 show a composition bias toward acidic residues; sequence AEEGEPMLEMGESDFSEDEQ. Residues 149–184 are disordered; that stretch reads AEEGEPMLEMGESDFSEDEQATASSNETIENIKEKV.

The protein belongs to the TatB family. As to quaternary structure, the Tat system comprises two distinct complexes: a TatABC complex, containing multiple copies of TatA, TatB and TatC subunits, and a separate TatA complex, containing only TatA subunits. Substrates initially bind to the TatABC complex, which probably triggers association of the separate TatA complex to form the active translocon.

The protein resides in the cell inner membrane. In terms of biological role, part of the twin-arginine translocation (Tat) system that transports large folded proteins containing a characteristic twin-arginine motif in their signal peptide across membranes. Together with TatC, TatB is part of a receptor directly interacting with Tat signal peptides. TatB may form an oligomeric binding site that transiently accommodates folded Tat precursor proteins before their translocation. This chain is Sec-independent protein translocase protein TatB, found in Histophilus somni (strain 129Pt) (Haemophilus somnus).